We begin with the raw amino-acid sequence, 304 residues long: Zinc carboxypeptidase (304 aa).

In terms of domain architecture, Peptidase M14 spans 1–294 (QYHTLPEIYS…DSVVTILKES (294 aa)). Residues histidine 58 and glutamate 61 each contribute to the Zn(2+) site. A disulfide bond links cysteine 125 and cysteine 148. Residue histidine 184 participates in Zn(2+) binding. Residue glutamate 259 is the Proton donor/acceptor of the active site.

The protein belongs to the peptidase M14 family. Requires Zn(2+) as cofactor. Gut specific.

The protein localises to the secreted. Its function is as follows. Involved in the digestion of the blood meal. The polypeptide is Zinc carboxypeptidase (Simulium vittatum (Striped black fly)).